A 427-amino-acid polypeptide reads, in one-letter code: Synaptotagmin-A (427 aa).

Residues 1-57 (MKLTEAYHDALAALPATPPLPTAVANATEAAAGSEEGKQDGFSKVKVKEKFMNELNK) are Vesicular-facing. N-linked (GlcNAc...) asparagine glycosylation is present at N26. Residues 58 to 84 (IPLPPWALVAIAIVAIILGLTCCFCIC) form a helical membrane-spanning segment. Topologically, residues 85 to 427 (KKCLLKKKNK…EVDATLGMKK (343 aa)) are cytoplasmic. A disordered region spans residues 96 to 145 (KGKEKGGKNAMTMKDVKEMGKSGKEQALKDEDEDAETGLTTDGKEEEKED). Residues 109-124 (KDVKEMGKSGKEQALK) are compositionally biased toward basic and acidic residues. The phospholipid binding stretch occupies residues 141–387 (EEKEDEKLGK…AIGKVFVGYN (247 aa)). C2 domains follow at residues 147–266 (KLGK…EEWR) and 278–411 (KLGD…AQWH). Residues L177, D178, D184, D236, F237, D238, S241, K242, D244, D309, D315, D369, D371, and D377 each coordinate Ca(2+).

Belongs to the synaptotagmin family. Homodimer or homotrimer (possible). Ca(2+) is required as a cofactor. As to expression, forebrain, cerebellum and neuroendocrine cells.

The protein localises to the cytoplasmic vesicle. It localises to the secretory vesicle. The protein resides in the synaptic vesicle membrane. Its subcellular location is the synapse. In terms of biological role, may have a regulatory role in the membrane interactions during trafficking of synaptic vesicles at the active zone of the synapse. It binds acidic phospholipids with a specificity that requires the presence of both an acidic head group and a diacyl backbone. This is Synaptotagmin-A (P65-A) from Diplobatis ommata (Ocellated electric ray).